The chain runs to 348 residues: NADH-quinone oxidoreductase subunit H (348 aa).

8 helical membrane passes run 10 to 30, 82 to 102, 115 to 135, 161 to 181, 199 to 219, 251 to 271, 287 to 307, and 322 to 342; these read LPLF…LVLI, GVFL…WAVV, VGLL…IMGG, IGFV…TTIV, LLDW…ISAL, LFFL…TILF, VPGV…FAMV, and LGWK…AAIL.

Belongs to the complex I subunit 1 family. NDH-1 is composed of 14 different subunits. Subunits NuoA, H, J, K, L, M, N constitute the membrane sector of the complex.

Its subcellular location is the cell inner membrane. The enzyme catalyses a quinone + NADH + 5 H(+)(in) = a quinol + NAD(+) + 4 H(+)(out). Functionally, NDH-1 shuttles electrons from NADH, via FMN and iron-sulfur (Fe-S) centers, to quinones in the respiratory chain. The immediate electron acceptor for the enzyme in this species is believed to be ubiquinone. Couples the redox reaction to proton translocation (for every two electrons transferred, four hydrogen ions are translocated across the cytoplasmic membrane), and thus conserves the redox energy in a proton gradient. This subunit may bind ubiquinone. This chain is NADH-quinone oxidoreductase subunit H, found in Bartonella bacilliformis (strain ATCC 35685 / KC583 / Herrer 020/F12,63).